The sequence spans 497 residues: Glutamyl-tRNA(Gln) amidotransferase subunit A (497 aa).

Active-site charge relay system residues include Lys91 and Ser166. The disordered stretch occupies residues 143–171 (SSTENSAYGPTHNPWDLERTAGGSGGGSS). The active-site Acyl-ester intermediate is the Ser190.

It belongs to the amidase family. GatA subfamily. Heterotrimer of A, B and C subunits.

The enzyme catalyses L-glutamyl-tRNA(Gln) + L-glutamine + ATP + H2O = L-glutaminyl-tRNA(Gln) + L-glutamate + ADP + phosphate + H(+). Its function is as follows. Allows the formation of correctly charged Gln-tRNA(Gln) through the transamidation of misacylated Glu-tRNA(Gln) in organisms which lack glutaminyl-tRNA synthetase. The reaction takes place in the presence of glutamine and ATP through an activated gamma-phospho-Glu-tRNA(Gln). The polypeptide is Glutamyl-tRNA(Gln) amidotransferase subunit A (Corynebacterium glutamicum (strain ATCC 13032 / DSM 20300 / JCM 1318 / BCRC 11384 / CCUG 27702 / LMG 3730 / NBRC 12168 / NCIMB 10025 / NRRL B-2784 / 534)).